Consider the following 217-residue polypeptide: D-methionine transport system permease protein MetI (217 aa).

Residues 1–19 are Periplasmic-facing; the sequence is MSEPMMWLLVRGVWETLAM. Residues 13–204 form the ABC transmembrane type-1 domain; that stretch reads VWETLAMTFV…LLVILVYLIQ (192 aa). The chain crosses the membrane as a helical span at residues 20-40; it reads TFVSGFFGFVIGLPVGVLLYV. Over 41 to 57 the chain is Cytoplasmic; that stretch reads TRPGQIIANAKLYRTVS. A helical transmembrane segment spans residues 58–78; the sequence is AIVNIFRSIPFIILLVWMIPF. Residues 79–80 are Periplasmic-facing; it reads TR. The chain crosses the membrane as a helical span at residues 81–101; the sequence is VIVGTSIGLQAAIVPLTVGAA. Topologically, residues 102 to 151 are cytoplasmic; it reads PFIARMVENALLEIPTGLIEASRAMGATPMQIVRKVLLPEALPGLVNAAT. A helical membrane pass occupies residues 152 to 172; sequence ITLITLVGYSAMGGAVGAGGL. Over 173 to 185 the chain is Periplasmic; it reads GQIGYQYGYIGYN. Residues 186-206 traverse the membrane as a helical segment; sequence ATVMNTVLVLLVILVYLIQFA. Topologically, residues 207 to 217 are cytoplasmic; sequence GDRIVRAVTRK.

Belongs to the binding-protein-dependent transport system permease family. CysTW subfamily.

The protein localises to the cell inner membrane. Part of the binding-protein-dependent transport system for D-methionine and the toxic methionine analog alpha-methyl-methionine. Probably responsible for the translocation of the substrate across the membrane. In terms of biological role, (Microbial infection) Probably transports the toxic C-terminal region of CdiA from E.coli strain MHI813 across the inner membrane to the cytoplasm, where CdiA has a toxic effect. Toxin transport is strain-specific, mutations in this gene do not confer resistance to several other tested CdiA toxins. The polypeptide is D-methionine transport system permease protein MetI (metI) (Escherichia coli (strain K12)).